The chain runs to 288 residues: uncharacterized protein (288 aa).

The ATP-grasp domain maps to 107 to 288 (KQIPTLIGPQ…LAIQLLASIA (182 aa)). Residues K145 and 178–188 (QQYIATSNSEA) each bind ATP. Mg(2+)-binding residues include D248, E261, and N263. Mn(2+)-binding residues include D248, E261, and N263.

This sequence belongs to the RimK family.

This is an uncharacterized protein from Mycoplasma pneumoniae (strain ATCC 29342 / M129 / Subtype 1) (Mycoplasmoides pneumoniae).